The following is a 139-amino-acid chain: Actin-depolymerizing factor 6 (139 aa).

Positions 5–139 (ASGMAVGDEC…SMDIVKARAL (135 aa)) constitute an ADF-H domain.

It belongs to the actin-binding proteins ADF family.

Actin-depolymerizing protein. Severs actin filaments (F-actin) and binds to actin monomers. In Oryza sativa subsp. japonica (Rice), this protein is Actin-depolymerizing factor 6 (ADF6).